The chain runs to 384 residues: MAALVVRGVRDMLKRADFATVPRRQRHKKKWASTEPKFPATRLALQNFDMTYSVQFGDLWPSIRVSLLSEQKYGALVNNFAAGDRVSAELEQLKARDFVNEAVFHREPEPENSQTAAPSPASWACSPNLRCFTFTRGDVSRFPPARLGSLGLMDYYLMDAASLLPVLALGLQPGDTVLDLCAAPGGKTLALLQTGCCRNLAANDLSTSRTSRLQRVLHSYVPQDVRDKNRVRVTSWDGRKWGELEGDTYDRVLVDVPCTTDRHSLHEEENSIFQRSRKKERQMLPVLQVQLLAAGLLATKPGGHIVYSTCSLSHLQNEYVVQGAIELLDNQYSIKVQVEDLTHFRKLFMNTFSFFPSCQVGELVIPNLMANFGPMYFCKMCRMT.

The transit peptide at 1–25 (MAALVVRGVRDMLKRADFATVPRRQ) directs the protein to the mitochondrion. S-adenosyl-L-methionine contacts are provided by G185, G186, K187, and D204. S206 carries the post-translational modification Phosphoserine. S-adenosyl-L-methionine is bound by residues R209, D237, G238, and D255. Residue C310 is the Nucleophile of the active site.

Belongs to the class I-like SAM-binding methyltransferase superfamily. RsmB/NOP family. In terms of assembly, heterodimer with MTERFD2/MTERF4; this interaction seems to be required for NSUN4 recruitment to the mitochondrial large ribosomal subunit.

It localises to the mitochondrion. It carries out the reaction a cytidine in rRNA + S-adenosyl-L-methionine = a 5-methylcytidine in rRNA + S-adenosyl-L-homocysteine + H(+). The catalysed reaction is a cytidine in mRNA + S-adenosyl-L-methionine = a 5-methylcytidine in mRNA + S-adenosyl-L-homocysteine + H(+). Its function is as follows. Mitochondrial RNA cytosine C(5)-methyltransferase that methylates cytosine to 5-methylcytosine (m5C) in various RNAs, such as rRNAs, mRNAs and some long non-coding RNAs (lncRNAs). Involved in mitochondrial ribosome small subunit (SSU) maturation by catalyzing methylation of mitochondrial 12S rRNA; the function is independent of MTERFD2/MTERF4 and assembled mitochondrial ribosome large subunit (LSU). Targeted to LSU by MTERFD2/MTERF4 and probably is involved in a final step in ribosome biogenesis to ensure that SSU and LSU are assembled. In vitro can methylate 16S rRNA of the LSU; the methylation is enhanced by MTERFD/MTERF4. Also acts as a regulator of innate immunity by marking double-stranded mitochondrial RNAs(mt-dsRNAs) generated in response to stress: catalyzes m5C modification on mitochondrial RNAs, such as a mRNAs and lncRNAs, with a preference for the termini of light-strand lncRNAs, promoting their degradation and cytosolic release. Modified light-strand lncRNAs are then recognized by C1QBP reader and recruited to the mitochondrial degradosome complex, which promotes their degradation. The protein is 5-cytosine rRNA methyltransferase NSUN4 (NSUN4) of Bos taurus (Bovine).